Consider the following 720-residue polypeptide: Putative fatty acid oxidation complex trifunctional enzyme (720 aa).

Residues 1-384 (MQNEIKKVCV…SWKYGPFELL (384 aa)) form a 3-hydroxyacyl-CoA dehydrogenase region. The enoyl-CoA hydratase/isomerase stretch occupies residues 453–720 (FVITTKMNCL…TIEKLKAIVK (268 aa)).

In the N-terminal section; belongs to the 3-hydroxyacyl-CoA dehydrogenase family. This sequence in the C-terminal section; belongs to the enoyl-CoA hydratase/isomerase family.

The catalysed reaction is a (3S)-3-hydroxyacyl-CoA + NAD(+) = a 3-oxoacyl-CoA + NADH + H(+). The enzyme catalyses a (3S)-3-hydroxyacyl-CoA = a (2E)-enoyl-CoA + H2O. It carries out the reaction a 4-saturated-(3S)-3-hydroxyacyl-CoA = a (3E)-enoyl-CoA + H2O. It catalyses the reaction a (3Z)-enoyl-CoA = a 4-saturated (2E)-enoyl-CoA. The catalysed reaction is a (3E)-enoyl-CoA = a 4-saturated (2E)-enoyl-CoA. This Rickettsia felis (strain ATCC VR-1525 / URRWXCal2) (Rickettsia azadi) protein is Putative fatty acid oxidation complex trifunctional enzyme.